The primary structure comprises 72 residues: UPF0270 protein YheU (72 aa).

It belongs to the UPF0270 family.

The protein is UPF0270 protein YheU of Salmonella choleraesuis (strain SC-B67).